Reading from the N-terminus, the 239-residue chain is MYYCNRDNCNQTDNAKDKAHPRNLIPELCRQFYNLGWVTGTGGGISLKYGDEIYIAPSGVQKERIQPDDLFVCDIDEKDISSPPPYRNLKKSQCTPLFMNAYTMRDAGAVIHTHSKAAVMATLMFPGKEFLITHQEMIKGIKKGTSGGYYRYDDMLAVPIVENTPEEKDLKERMARAMTEYPDTCAVLVRRHGVYVWGDTWEKAKTMCECYDYLFEIAVQMKQHGLDPSAIPTEEKGIV.

A substrate-binding site is contributed by Cys-94. Zn(2+) contacts are provided by His-112 and His-114. The active-site Proton donor/acceptor is Glu-136. His-192 lines the Zn(2+) pocket.

It belongs to the aldolase class II family. MtnB subfamily. The cofactor is Zn(2+).

It localises to the cytoplasm. The enzyme catalyses 5-(methylsulfanyl)-D-ribulose 1-phosphate = 5-methylsulfanyl-2,3-dioxopentyl phosphate + H2O. The protein operates within amino-acid biosynthesis; L-methionine biosynthesis via salvage pathway; L-methionine from S-methyl-5-thio-alpha-D-ribose 1-phosphate: step 2/6. Functionally, catalyzes the dehydration of methylthioribulose-1-phosphate (MTRu-1-P) into 2,3-diketo-5-methylthiopentyl-1-phosphate (DK-MTP-1-P). Functions in the methionine salvage pathway. May play a role in apoptosis. This is Methylthioribulose-1-phosphate dehydratase from Xenopus tropicalis (Western clawed frog).